The following is a 220-amino-acid chain: Claudin-6 (220 aa).

Residues 1–7 lie on the Cytoplasmic side of the membrane; sequence MASAGMQ. The chain crosses the membrane as a helical span at residues 8-28; sequence ILGVVLTLLGWVNGLVSCALP. The Extracellular segment spans residues 29–81; it reads MWKVTAFIGNSIVVAQVVWEGLWMSCVVQSTGQMQCKVYDSLLALPQDLQAAR. Residues 82–102 form a helical membrane-spanning segment; sequence ALCVIALLVALFGLLVYLAGA. The Cytoplasmic portion of the chain corresponds to 103 to 116; sequence KCTTCVEEKDSKAR. A helical transmembrane segment spans residues 117–137; the sequence is LVLTSGIVFVISGVLTLIPVC. At 138-160 the chain is on the extracellular side; the sequence is WTAHAIIRDFYNPLVAEAQKREL. The helical transmembrane segment at 161–181 threads the bilayer; it reads GASLYLGWAASGLLLLGGGLL. Over 182-220 the chain is Cytoplasmic; that stretch reads CCTCPSGGSQGPSHYMARYSTSAPAISRGPSEYPTKNYV. A phosphoserine mark is found at S201, S203, S208, and S212. Residues 219–220 form an interactions with TJP1, TJP2 and TJP3 region; that stretch reads YV.

Belongs to the claudin family. In terms of assembly, directly interacts with TJP1/ZO-1, TJP2/ZO-2 and TJP3/ZO-3. Interacts with CLDN1, CD81 and OCLN. In terms of tissue distribution, expressed in the liver, in peripheral blood mononuclear cells and hepatocarcinoma cell lines.

It is found in the cell junction. It localises to the tight junction. The protein localises to the cell membrane. In terms of biological role, plays a major role in tight junction-specific obliteration of the intercellular space. Its function is as follows. (Microbial infection) Acts as a receptor for hepatitis C virus (HCV) entry into hepatic cells. This Homo sapiens (Human) protein is Claudin-6 (CLDN6).